The primary structure comprises 124 residues: Small ribosomal subunit protein uS12 (124 aa).

Aspartate 89 is subject to 3-methylthioaspartic acid. The tract at residues 102-124 (LDTSGVNNRKHGRSKYGTKRPKS) is disordered. A compositionally biased stretch (basic residues) spans 109-124 (NRKHGRSKYGTKRPKS).

This sequence belongs to the universal ribosomal protein uS12 family. In terms of assembly, part of the 30S ribosomal subunit. Contacts proteins S8 and S17. May interact with IF1 in the 30S initiation complex.

Its function is as follows. With S4 and S5 plays an important role in translational accuracy. Interacts with and stabilizes bases of the 16S rRNA that are involved in tRNA selection in the A site and with the mRNA backbone. Located at the interface of the 30S and 50S subunits, it traverses the body of the 30S subunit contacting proteins on the other side and probably holding the rRNA structure together. The combined cluster of proteins S8, S12 and S17 appears to hold together the shoulder and platform of the 30S subunit. The chain is Small ribosomal subunit protein uS12 from Francisella tularensis subsp. tularensis (strain FSC 198).